The sequence spans 360 residues: Protein-glutamate methylesterase/protein-glutamine glutaminase 3 (360 aa).

One can recognise a Response regulatory domain in the interval 14–131; sequence RVLVIDDSAT…AEGVQAYAEE (118 aa). Aspartate 65 carries the 4-aspartylphosphate modification. The CheB-type methylesterase domain occupies 169–360; sequence AGKDGRVVAV…AGKLMELDGA (192 aa). Catalysis depends on residues serine 181, histidine 207, and aspartate 303.

It belongs to the CheB family. Post-translationally, phosphorylated by CheA. Phosphorylation of the N-terminal regulatory domain activates the methylesterase activity.

It is found in the cytoplasm. It catalyses the reaction [protein]-L-glutamate 5-O-methyl ester + H2O = L-glutamyl-[protein] + methanol + H(+). It carries out the reaction L-glutaminyl-[protein] + H2O = L-glutamyl-[protein] + NH4(+). Functionally, involved in chemotaxis. Part of a chemotaxis signal transduction system that modulates chemotaxis in response to various stimuli. Catalyzes the demethylation of specific methylglutamate residues introduced into the chemoreceptors (methyl-accepting chemotaxis proteins or MCP) by CheR. Also mediates the irreversible deamidation of specific glutamine residues to glutamic acid. This Burkholderia thailandensis (strain ATCC 700388 / DSM 13276 / CCUG 48851 / CIP 106301 / E264) protein is Protein-glutamate methylesterase/protein-glutamine glutaminase 3.